A 453-amino-acid chain; its full sequence is Crh-like protein CRH11 (453 aa).

The signal sequence occupies residues methionine 1–alanine 21. Cysteine 24 and cysteine 32 form a disulfide bridge. A GH16 domain is found at lysine 28–glutamine 227. Glutamate 119 (nucleophile) is an active-site residue. The active-site Proton donor is the glutamate 123. 3 residues coordinate chitin: glutamate 123, tryptophan 204, and threonine 215. Disordered regions lie at residues leucine 281–serine 343, lysine 362–alanine 397, and glycine 410–asparagine 430. Composition is skewed to low complexity over residues serine 286–serine 343, threonine 363–alanine 397, and alanine 412–serine 425. An N-linked (GlcNAc...) asparagine glycan is attached at asparagine 290. Residue asparagine 430 is the site of GPI-anchor amidated asparagine attachment. Residues glycine 431–valine 453 constitute a propeptide, removed in mature form.

The protein belongs to the glycosyl hydrolase 16 family. CRH1 subfamily. The GPI-anchor is attached to the protein in the endoplasmic reticulum and serves to target the protein to the cell surface. There, the glucosamine-inositol phospholipid moiety is cleaved off and the GPI-modified mannoprotein is covalently attached via its lipidless GPI glycan remnant to the 1,6-beta-glucan of the outer cell wall layer.

Its subcellular location is the secreted. The protein resides in the cell wall. It localises to the membrane. It carries out the reaction Random endo-hydrolysis of N-acetyl-beta-D-glucosaminide (1-&gt;4)-beta-linkages in chitin and chitodextrins.. In terms of biological role, dual chitinase/transglycosylase that plays a role in cell wall architecture. Chitinase and transglycosylase activities are coupled. Required for the polysaccharide cross-linking at the septa and the cell wall. More specifically, transfers chitin to 1,6-beta-glucan in the cell wall. Plays an important role in fungal pathogenesis via its functions in cell wall assembly and regeneration, filamentation, and adherence to host cells. This chain is Crh-like protein CRH11 (CRH11), found in Candida albicans (strain SC5314 / ATCC MYA-2876) (Yeast).